The sequence spans 338 residues: Ferrochelatase (338 aa).

Fe cation-binding residues include His-210 and Glu-291.

It belongs to the ferrochelatase family.

It is found in the cytoplasm. The enzyme catalyses heme b + 2 H(+) = protoporphyrin IX + Fe(2+). Its pathway is porphyrin-containing compound metabolism; protoheme biosynthesis; protoheme from protoporphyrin-IX: step 1/1. Its function is as follows. Catalyzes the ferrous insertion into protoporphyrin IX. The chain is Ferrochelatase from Helicobacter acinonychis (strain Sheeba).